The chain runs to 443 residues: Endonuclease CUE2 (443 aa).

CUE domains are found at residues 8–51 and 55–98; these read DHES…KEND and TVDN…NYET. The Smr domain maps to 347-443; sequence LDFHGFLPSE…YFRIEGKKKK (97 aa).

Its function is as follows. mRNA endonuclease involved in the No-Go Decay (NGD) pathway, which catalyzes mRNA cleavage and degradation in response to ribosome collisions. Acts downstream of the ribosome collision sensor HEL2. Specifically recognizes and binds RPS7/eS7 polyubiquitinated by MOT2/NOT4 and HEL2, promoting CUE2 recruitment to stalled ribosomes, where it mediates mRNA cleavage upstream of the colliding ribosome. Also mediates mRNA cleavage within colliding ribosomes: recruited to colliding ribosomes downstream of the RQT (ribosome quality control trigger) complex following disassembly of stalled ribosomes and cleaves mRNAs partially released from the colliding ribosome. This Saccharomyces cerevisiae (strain ATCC 204508 / S288c) (Baker's yeast) protein is Endonuclease CUE2.